We begin with the raw amino-acid sequence, 1347 residues long: Neurofascin (1347 aa).

Residues 1-24 (MARQPPPPWVHAAFLLCLLSLGGA) form the signal peptide. Residues 25–1217 (IEIPMDPSIQ…NQADIATQGW (1193 aa)) lie on the Extracellular side of the membrane. Ig-like C2-type domains are found at residues 41–137 (PTIT…LQVS), 143–230 (PKEN…NPFT), 244–332 (PSFM…ISVR), 337–424 (PYWL…AFVS), 429–517 (PPRM…VRLE), and 521–603 (PTRI…QDLA). 4 disulfides stabilise this stretch: Cys-63–Cys-118, Cys-162–Cys-213, Cys-268–Cys-316, and Cys-358–Cys-408. Asn-305 is a glycosylation site (N-linked (GlcNAc...) asparagine). N-linked (GlcNAc...) asparagine glycans are attached at residues Asn-409 and Asn-446. Intrachain disulfides connect Cys-452/Cys-501 and Cys-543/Cys-592. At Tyr-481 the chain carries Phosphotyrosine. Asn-483 carries an N-linked (GlcNAc...) asparagine glycan. The residue at position 485 (Ser-485) is a Phosphoserine. Fibronectin type-III domains are found at residues 630-725 (RPRD…TSGA), 730-823 (NPGD…SGED), 828-930 (APTE…TPEG), and 934-1030 (APRR…PNEA). The segment at 713-740 (PSLPSERYRTSGAPPESNPGDVKGEGTR) is disordered. N-linked (GlcNAc...) asparagine glycans are attached at residues Asn-752 and Asn-778. Residues 915 to 934 (GDGPRSETKEFTTPEGVPSA) are disordered. Over residues 916–926 (DGPRSETKEFT) the composition is skewed to basic and acidic residues. Asn-973 and Asn-988 each carry an N-linked (GlcNAc...) asparagine glycan. Disordered regions lie at residues 1011 to 1040 (TQVG…PTLP) and 1090 to 1111 (TTAA…TKIH). Residues 1024–1040 (PAPPNEATPTAAPPTLP) show a composition bias toward pro residues. A compositionally biased stretch (low complexity) spans 1090 to 1105 (TTAAATTTTESPPTTT). The 93-residue stretch at 1114-1206 (APDEQSIWNV…ITFMTSTAYT (93 aa)) folds into the Fibronectin type-III 5 domain. Residues 1218 to 1238 (FIGLMCAIALLVLILLIVCFI) form a helical membrane-spanning segment. Topologically, residues 1239–1347 (KRSRGGKYPV…SPVNAIYSLA (109 aa)) are cytoplasmic. Residues 1248–1347 (VREKKDVPLG…SPVNAIYSLA (100 aa)) are disordered. Over residues 1261-1272 (PKEEDGSFDYSD) the composition is skewed to acidic residues. Phosphoserine occurs at positions 1267, 1281, 1294, 1297, 1333, 1334, and 1338. The segment covering 1278–1291 (LQGSQTSLDGTIKQ) has biased composition (polar residues).

The protein belongs to the immunoglobulin superfamily. L1/neurofascin/NgCAM family. Horseshoe-shaped homodimer. Probable constituent of a NFASC/NRCAM/ankyrin-G complex. Associates with the sodium channel beta-1 (SCN1B) and beta-3 (SCN3B) subunits. Interacts with GLDN/gliomedin. Interacts with MYOC.

The protein resides in the cell membrane. Its subcellular location is the cell junction. It is found in the paranodal septate junction. Functionally, cell adhesion, ankyrin-binding protein which may be involved in neurite extension, axonal guidance, synaptogenesis, myelination and neuron-glial cell interactions. This chain is Neurofascin (NFASC), found in Homo sapiens (Human).